The sequence spans 131 residues: Torsin-1A-interacting protein 2, isoform IFRG15 (131 aa).

This Homo sapiens (Human) protein is Torsin-1A-interacting protein 2, isoform IFRG15 (TOR1AIP2).